We begin with the raw amino-acid sequence, 120 residues long: Vanadium-binding protein 2 (120 aa).

Residues 1–20 (MSKVIFALVLVVVLVACINA) form the signal peptide. The propeptide occupies 21–29 (TYVEFEEAY). Cystine bridges form between cysteine 34–cysteine 88, cysteine 38–cysteine 84, cysteine 42–cysteine 81, cysteine 48–cysteine 74, cysteine 52–cysteine 69, cysteine 56–cysteine 65, cysteine 92–cysteine 119, cysteine 97–cysteine 114, and cysteine 101–cysteine 111.

As to quaternary structure, interacts with VIP1. As to expression, expressed in vanadocytes.

The protein resides in the cytoplasm. Its function is as follows. Acts as a vanadium reductase which may form an electron transfer cascade in conjunction with NADPH and glutathione through thiol disulfide exchange reactions. Partial cleavage of its disulfide bonds results in the reduction of V(5+) to V(4+). Binds up to 24 V(4+) ions per protein at pH 7.5. Also binds Fe(3+) and Cu(2+) and, to a lesser extent, Co(2+), Zn(2+) and Ni(2+). The sequence is that of Vanadium-binding protein 2 from Ascidia sydneiensis samea (Vanadium-rich ascidian).